Consider the following 270-residue polypeptide: Tryptophan synthase alpha chain (270 aa).

Residues Glu-57 and Asp-68 each act as proton acceptor in the active site.

The protein belongs to the TrpA family. In terms of assembly, tetramer of two alpha and two beta chains.

The enzyme catalyses (1S,2R)-1-C-(indol-3-yl)glycerol 3-phosphate + L-serine = D-glyceraldehyde 3-phosphate + L-tryptophan + H2O. It participates in amino-acid biosynthesis; L-tryptophan biosynthesis; L-tryptophan from chorismate: step 5/5. Its function is as follows. The alpha subunit is responsible for the aldol cleavage of indoleglycerol phosphate to indole and glyceraldehyde 3-phosphate. This is Tryptophan synthase alpha chain from Mycobacterium leprae (strain Br4923).